We begin with the raw amino-acid sequence, 260 residues long: NAD-capped RNA hydrolase NudC (260 aa).

Residue Arg74 coordinates substrate. Cys103, Cys106, Cys121, and Cys124 together coordinate Zn(2+). Tyr129 contacts substrate. Positions 130–253 constitute a Nudix hydrolase domain; sequence PRIFPCIIVA…TIARALIEQT (124 aa). Residues Ala163, Glu179, and Glu183 each contribute to the a divalent metal cation site. Residues 164-185 carry the Nudix box motif; the sequence is GFLEAGETLEDCVAREVHEETG. 197-204 contributes to the substrate binding site; it reads QPWAFPSS. Glu224 lines the a divalent metal cation pocket. Residue Ala246 participates in substrate binding.

It belongs to the Nudix hydrolase family. NudC subfamily. In terms of assembly, homodimer. Mg(2+) serves as cofactor. The cofactor is Mn(2+). It depends on Zn(2+) as a cofactor.

It carries out the reaction a 5'-end NAD(+)-phospho-ribonucleoside in mRNA + H2O = a 5'-end phospho-adenosine-phospho-ribonucleoside in mRNA + beta-nicotinamide D-ribonucleotide + 2 H(+). The enzyme catalyses NAD(+) + H2O = beta-nicotinamide D-ribonucleotide + AMP + 2 H(+). The catalysed reaction is NADH + H2O = reduced beta-nicotinamide D-ribonucleotide + AMP + 2 H(+). Its function is as follows. mRNA decapping enzyme that specifically removes the nicotinamide adenine dinucleotide (NAD) cap from a subset of mRNAs by hydrolyzing the diphosphate linkage to produce nicotinamide mononucleotide (NMN) and 5' monophosphate mRNA. The NAD-cap is present at the 5'-end of some mRNAs and stabilizes RNA against 5'-processing. Has preference for mRNAs with a 5'-end purine. Catalyzes the hydrolysis of a broad range of dinucleotide pyrophosphates. The polypeptide is NAD-capped RNA hydrolase NudC (Vibrio parahaemolyticus serotype O3:K6 (strain RIMD 2210633)).